The sequence spans 750 residues: Photosystem I P700 chlorophyll a apoprotein A1 (750 aa).

8 helical membrane passes run 72–95 (VFSA…FHGA), 158–181 (LYST…FHYH), 197–221 (LNHH…HVSL), 293–311 (TAHH…GHMY), 348–371 (WHAQ…HHMY), 387–413 (LSIF…IFMV), 435–457 (AIIS…LYIH), and 532–550 (FLVH…LILL). [4Fe-4S] cluster is bound by residues C574 and C583. 2 consecutive transmembrane segments (helical) span residues 590-611 (HVFL…HFSW) and 664-686 (LSAY…MFLF). H675 contributes to the chlorophyll a' binding site. 2 residues coordinate chlorophyll a: M683 and Y691. Residue W692 coordinates phylloquinone. The helical transmembrane segment at 724 to 744 (AVGVAHYLLGGIATTWAFFLA) threads the bilayer.

It belongs to the PsaA/PsaB family. As to quaternary structure, the PsaA/B heterodimer binds the P700 chlorophyll special pair and subsequent electron acceptors. PSI consists of a core antenna complex that captures photons, and an electron transfer chain that converts photonic excitation into a charge separation. The eukaryotic PSI reaction center is composed of at least 11 subunits. P700 is a chlorophyll a/chlorophyll a' dimer, A0 is one or more chlorophyll a, A1 is one or both phylloquinones and FX is a shared 4Fe-4S iron-sulfur center. is required as a cofactor.

The protein resides in the plastid. It is found in the chloroplast thylakoid membrane. The enzyme catalyses reduced [plastocyanin] + hnu + oxidized [2Fe-2S]-[ferredoxin] = oxidized [plastocyanin] + reduced [2Fe-2S]-[ferredoxin]. Its function is as follows. PsaA and PsaB bind P700, the primary electron donor of photosystem I (PSI), as well as the electron acceptors A0, A1 and FX. PSI is a plastocyanin-ferredoxin oxidoreductase, converting photonic excitation into a charge separation, which transfers an electron from the donor P700 chlorophyll pair to the spectroscopically characterized acceptors A0, A1, FX, FA and FB in turn. Oxidized P700 is reduced on the lumenal side of the thylakoid membrane by plastocyanin. This chain is Photosystem I P700 chlorophyll a apoprotein A1, found in Chlorokybus atmophyticus (Soil alga).